An 865-amino-acid chain; its full sequence is cGMP-specific 3',5'-cyclic phosphodiesterase (865 aa).

Serine 92 bears the Phosphoserine mark. GAF domains are found at residues 154–304 and 336–493; these read DVTA…GIVL and SLEV…GLGI. One can recognise a PDEase domain in the interval 526 to 850; sequence ETRELQSLAA…QKWQALAEQQ (325 aa). Histidine 603 serves as the catalytic Proton donor. The Zn(2+) site is built by histidine 607, histidine 643, aspartate 644, and aspartate 754. Aspartate 644 lines the Mg(2+) pocket. Glutamine 807 contributes to the 3',5'-cyclic GMP binding site.

Belongs to the cyclic nucleotide phosphodiesterase family. Zn(2+) serves as cofactor. Requires Mg(2+) as cofactor. Post-translationally, phosphorylation is regulated by binding of cGMP to the two allosteric sites. Phosphorylation by PRKG1 leads to its activation.

It carries out the reaction 3',5'-cyclic GMP + H2O = GMP + H(+). The protein operates within purine metabolism; 3',5'-cyclic GMP degradation; GMP from 3',5'-cyclic GMP: step 1/1. Most potently inhibited by zaprinast and dipyridamole. Plays a role in signal transduction by regulating the intracellular concentration of cyclic nucleotides. This phosphodiesterase catalyzes the specific hydrolysis of cGMP to 5'-GMP. Specifically regulates nitric-oxide-generated cGMP. The polypeptide is cGMP-specific 3',5'-cyclic phosphodiesterase (PDE5A) (Bos taurus (Bovine)).